A 226-amino-acid chain; its full sequence is Transmembrane protein 204 (226 aa).

Over 1-5 (MTVQK) the chain is Cytoplasmic. Residues 6-26 (LVATAVLVALVSLILNNAAAF) traverse the membrane as a helical segment. At 27–103 (TPNWVYQTLE…LQFDMMRACN (77 aa)) the chain is on the extracellular side. A helical transmembrane segment spans residues 104 to 124 (LVATAALAVGQITFILGLTGL). The Cytoplasmic portion of the chain corresponds to 125–136 (PLMSPESQCWEE). Residues 137 to 157 (AMAAAFQLASFVLVIGLVTFY) traverse the membrane as a helical segment. Residues 158–170 (RIGPYTNLSWSCY) are Extracellular-facing. Asn164 carries an N-linked (GlcNAc...) asparagine glycan. The chain crosses the membrane as a helical span at residues 171 to 191 (LNIGACLLATLAAAMLIWNIL). Topologically, residues 192-226 (HRREDCMAPRVIVISRSLTARFRRGLDNDYVESPC) are cytoplasmic.

Its subcellular location is the cell junction. It localises to the adherens junction. It is found in the cell membrane. Can influence paracellular permeability. Appears to be involved in cell-cell interactions through adherens. This chain is Transmembrane protein 204 (Tmem204), found in Rattus norvegicus (Rat).